Reading from the N-terminus, the 424-residue chain is Gamma-glutamyl phosphate reductase (424 aa).

Belongs to the gamma-glutamyl phosphate reductase family.

The protein resides in the cytoplasm. The enzyme catalyses L-glutamate 5-semialdehyde + phosphate + NADP(+) = L-glutamyl 5-phosphate + NADPH + H(+). Its pathway is amino-acid biosynthesis; L-proline biosynthesis; L-glutamate 5-semialdehyde from L-glutamate: step 2/2. Catalyzes the NADPH-dependent reduction of L-glutamate 5-phosphate into L-glutamate 5-semialdehyde and phosphate. The product spontaneously undergoes cyclization to form 1-pyrroline-5-carboxylate. The polypeptide is Gamma-glutamyl phosphate reductase (Parvibaculum lavamentivorans (strain DS-1 / DSM 13023 / NCIMB 13966)).